Here is a 221-residue protein sequence, read N- to C-terminus: H-2 class II histocompatibility antigen, A-Q alpha chain (221 aa).

Positions 1–76 are alpha-1; the sequence is GIVVYQSPGD…KRSNFTPATN (76 aa). At 1–183 the chain is on the extracellular side; sequence GIVVYQSPGD…IPAPMSELTE (183 aa). Residues 77-170 form an alpha-2 region; sequence EAPQATVFPK…GLDEPVLKHW (94 aa). The Ig-like C1-type domain occupies 79 to 171; the sequence is PQATVFPKSP…LDEPVLKHWE (93 aa). The cysteines at positions 99 and 155 are disulfide-linked. Residue asparagine 110 is glycosylated (N-linked (GlcNAc...) asparagine). Positions 171–183 are connecting peptide; the sequence is EPEIPAPMSELTE. The helical transmembrane segment at 184 to 209 threads the bilayer; it reads TVVCALGLSVGLVGIVVGTIFIIQGL. Topologically, residues 210-221 are cytoplasmic; the sequence is RSGGTSRPPGPL.

It belongs to the MHC class II family.

It is found in the membrane. The polypeptide is H-2 class II histocompatibility antigen, A-Q alpha chain (H2-Aa) (Mus musculus (Mouse)).